We begin with the raw amino-acid sequence, 73 residues long: UPF0154 protein MG335.1 homolog (73 aa).

The chain crosses the membrane as a helical span at residues 6-26 (LALGLGIPLSLLVGVIIGYFI).

This sequence belongs to the UPF0154 family.

It is found in the membrane. The protein is UPF0154 protein MG335.1 homolog of Mycoplasma pneumoniae (strain ATCC 29342 / M129 / Subtype 1) (Mycoplasmoides pneumoniae).